The primary structure comprises 43 residues: Protein PsbN (43 aa).

The chain crosses the membrane as a helical span at residues 5–27 (ALVAISISRLLVSFTGYALYTAF).

It belongs to the PsbN family.

The protein localises to the plastid. It is found in the chloroplast thylakoid membrane. Functionally, may play a role in photosystem I and II biogenesis. This Bowenia serrulata (Byfield fern) protein is Protein PsbN.